A 251-amino-acid polypeptide reads, in one-letter code: Uridylate kinase (251 aa).

Residue 24–27 (KISG) coordinates ATP. An involved in allosteric activation by GTP region spans residues 32-37 (GDQGFG). Gly66 is a binding site for UMP. Positions 67 and 71 each coordinate ATP. UMP-binding positions include Asp86 and 147–154 (TGNPYFTT). ATP-binding residues include Asn175, Tyr181, and Asp184.

It belongs to the UMP kinase family. Homohexamer.

It is found in the cytoplasm. The enzyme catalyses UMP + ATP = UDP + ADP. It participates in pyrimidine metabolism; CTP biosynthesis via de novo pathway; UDP from UMP (UMPK route): step 1/1. With respect to regulation, allosterically activated by GTP. Inhibited by UTP. In terms of biological role, catalyzes the reversible phosphorylation of UMP to UDP. This is Uridylate kinase from Ruegeria pomeroyi (strain ATCC 700808 / DSM 15171 / DSS-3) (Silicibacter pomeroyi).